The sequence spans 297 residues: Virulence genes transcriptional activator SpvR (297 aa).

An HTH lysR-type domain is found at 1–61; the sequence is MDFLINKKLK…IRKNGTLIPT (61 aa). The segment at residues 21 to 40 is a DNA-binding region (H-T-H motif); the sequence is FSIATSVLYITRTPLSRVIS.

This sequence belongs to the LysR transcriptional regulatory family.

The protein resides in the cytoplasm. Functionally, positive regulator for the plasmid-encoded virulence factors SpvA, SpvB, and SpvC. This is Virulence genes transcriptional activator SpvR (spvR) from Salmonella dublin.